The chain runs to 332 residues: Ribosomal RNA small subunit methyltransferase C (332 aa).

It belongs to the methyltransferase superfamily. RsmC family. In terms of assembly, monomer.

The protein localises to the cytoplasm. The catalysed reaction is guanosine(1207) in 16S rRNA + S-adenosyl-L-methionine = N(2)-methylguanosine(1207) in 16S rRNA + S-adenosyl-L-homocysteine + H(+). In terms of biological role, specifically methylates the guanine in position 1207 of 16S rRNA in the 30S particle. The sequence is that of Ribosomal RNA small subunit methyltransferase C from Pseudomonas syringae pv. syringae (strain B728a).